Consider the following 743-residue polypeptide: Glycerol-3-phosphate O-acyltransferase 2 (743 aa).

The Lumenal portion of the chain corresponds to 1–34 (MSAPAADHNAAKPIPHVPQASRRYKNSYNGFVYN). A helical transmembrane segment spans residues 35 to 55 (IHTWLYDVSVFLFNILFTIFF). At 56–442 (REIKVRGAYN…TKLEALRCFV (387 aa)) the chain is on the cytoplasmic side. Residues 443–457 (TLIVRLIKFSVFAIL) form a helical membrane-spanning segment. Residue S458 is a topological domain, lumenal. A helical membrane pass occupies residues 459–473 (LPGSILFTPIFIICR). At 474 to 501 (VYSEKKAKEGLKKSLVKIKGTDLLATWK) the chain is on the cytoplasmic side. A helical membrane pass occupies residues 502–522 (LIVALILAPILYVTYSILLII). Residues 523–531 (LARKQHYCR) lie on the Lumenal side of the membrane. Residues 532–552 (IWVPSNNAFIQFVYFYALLVF) form a helical membrane-spanning segment. Over 553 to 743 (TTYSSLKTGE…RQKREHEKKE (191 aa)) the chain is Cytoplasmic. 9 positions are modified to phosphoserine: S632, S637, S647, S651, S654, S657, S664, S668, and S671. T673 bears the Phosphothreonine mark. Residues 682–743 (KQGQWKSEGE…RQKREHEKKE (62 aa)) are disordered. S688 is modified (phosphoserine). A compositionally biased stretch (acidic residues) spans 691 to 700 (ETSEDEDEFD). T692 carries the phosphothreonine modification. Phosphoserine is present on S693.

The protein belongs to the GPAT/DAPAT family. Post-translationally, phosphorylated at a conserved motif involving Ser-664, Ser-668 and Ser-671. This phosphorylation plays a critical role for efficient TAG mobilization. Phosphorylation deficiency at this motif increases the enzyme activity and consequently induces de novo formation of phosphatidic acid.

The protein localises to the lipid droplet. It is found in the endoplasmic reticulum membrane. The enzyme catalyses sn-glycerol 3-phosphate + an acyl-CoA = a 1-acyl-sn-glycero-3-phosphate + CoA. The catalysed reaction is dihydroxyacetone phosphate + an acyl-CoA = a 1-acylglycerone 3-phosphate + CoA. It catalyses the reaction sn-glycerol 3-phosphate + hexadecanoyl-CoA = 1-hexadecanoyl-sn-glycero-3-phosphate + CoA. It carries out the reaction (9Z)-hexadecenoyl-CoA + sn-glycerol 3-phosphate = 1-(9Z-hexadecenoyl)-sn-glycero-3-phosphate + CoA. The enzyme catalyses sn-glycerol 3-phosphate + octadecanoyl-CoA = 1-octadecanoyl-sn-glycero-3-phosphate + CoA. The catalysed reaction is sn-glycerol 3-phosphate + (9Z)-octadecenoyl-CoA = 1-(9Z-octadecenoyl)-sn-glycero-3-phosphate + CoA. Its pathway is phospholipid metabolism; CDP-diacylglycerol biosynthesis; CDP-diacylglycerol from sn-glycerol 3-phosphate: step 1/3. In terms of biological role, dual substrate-specific glycerol-3-phosphate/dihydroxyacetone phosphate sn-1 acyltransferase, catalyzing the first and committed reaction in the de novo synthesis of glycerophospholipids and triacylglycerols (TAGs). Can use both Gly-3-P and dihydroxyacetone phosphate with similar efficiencies and has a broad fatty acyl-CoA specificity profile. Transfers a fatty acid from fatty acyl-CoA to the sn-1 position of glycerol-3-phosphate to produce lysophosphatidic acid (LysoPA). These lipids not only are precursors of glycerolipids, but also are dynamic components of signal transduction systems that control cell physiology. This is Glycerol-3-phosphate O-acyltransferase 2 (GPT2) from Saccharomyces cerevisiae (strain ATCC 204508 / S288c) (Baker's yeast).